A 1059-amino-acid polypeptide reads, in one-letter code: DNA-directed RNA polymerase subunit beta (1059 aa).

The protein belongs to the RNA polymerase beta chain family. As to quaternary structure, in plastids the minimal PEP RNA polymerase catalytic core is composed of four subunits: alpha, beta, beta', and beta''. When a (nuclear-encoded) sigma factor is associated with the core the holoenzyme is formed, which can initiate transcription (Potential).

The protein localises to the plastid. It is found in the apicoplast. The enzyme catalyses RNA(n) + a ribonucleoside 5'-triphosphate = RNA(n+1) + diphosphate. Its function is as follows. DNA-dependent RNA polymerase catalyzes the transcription of DNA into RNA using the four ribonucleoside triphosphates as substrates. This is DNA-directed RNA polymerase subunit beta (rpoB) from Eimeria tenella (Coccidian parasite).